A 272-amino-acid polypeptide reads, in one-letter code: Formamidopyrimidine-DNA glycosylase (272 aa).

Catalysis depends on P2, which acts as the Schiff-base intermediate with DNA. E3 acts as the Proton donor in catalysis. K56 (proton donor; for beta-elimination activity) is an active-site residue. Residues H89, R108, and K149 each coordinate DNA. The FPG-type zinc-finger motif lies at 234–268; it reads LAYGRAGEMCVNCETPLENLKLGQRASVFCPQCQP. R258 acts as the Proton donor; for delta-elimination activity in catalysis.

The protein belongs to the FPG family. As to quaternary structure, monomer. The cofactor is Zn(2+).

It catalyses the reaction Hydrolysis of DNA containing ring-opened 7-methylguanine residues, releasing 2,6-diamino-4-hydroxy-5-(N-methyl)formamidopyrimidine.. The catalysed reaction is 2'-deoxyribonucleotide-(2'-deoxyribose 5'-phosphate)-2'-deoxyribonucleotide-DNA = a 3'-end 2'-deoxyribonucleotide-(2,3-dehydro-2,3-deoxyribose 5'-phosphate)-DNA + a 5'-end 5'-phospho-2'-deoxyribonucleoside-DNA + H(+). In terms of biological role, involved in base excision repair of DNA damaged by oxidation or by mutagenic agents. Acts as a DNA glycosylase that recognizes and removes damaged bases. Has a preference for oxidized purines, such as 7,8-dihydro-8-oxoguanine (8-oxoG). Has AP (apurinic/apyrimidinic) lyase activity and introduces nicks in the DNA strand. Cleaves the DNA backbone by beta-delta elimination to generate a single-strand break at the site of the removed base with both 3'- and 5'-phosphates. The sequence is that of Formamidopyrimidine-DNA glycosylase from Acinetobacter baylyi (strain ATCC 33305 / BD413 / ADP1).